A 341-amino-acid polypeptide reads, in one-letter code: LIM and senescent cell antigen-like-containing domain protein 2 (341 aa).

LIM zinc-binding domains lie at Ala13–Pro74, Cys76–Lys133, Tyr138–Val195, Pro196–Asp255, and Val256–Glu315. Phe22 is modified (phosphoserine). Position 327 is a phosphothreonine (Thr327). Ser328 carries the phosphoserine modification.

As to quaternary structure, interacts with TGFB1I1. Interacts with integrin-linked protein kinase 1 (ILK) via the first LIM domain, and in competition with LIMS1. Part of the heterotrimeric IPP complex composed of integrin-linked kinase (ILK), LIMS1 or LIMS2, and PARVA.

It localises to the nucleus. It is found in the cell junction. The protein resides in the focal adhesion. The protein localises to the cell membrane. Its function is as follows. Adapter protein in a cytoplasmic complex linking beta-integrins to the actin cytoskeleton, bridges the complex to cell surface receptor tyrosine kinases and growth factor receptors. Plays a role in modulating cell spreading and migration. The polypeptide is LIM and senescent cell antigen-like-containing domain protein 2 (LIMS2) (Homo sapiens (Human)).